Consider the following 148-residue polypeptide: NTR domain-containing protein (148 aa).

The signal sequence occupies residues 1–26; it reads MVCRFSYVQVVLILVVLSVIISWANA. 3 disulfide bridges follow: Cys-27/Cys-96, Cys-29/Cys-122, and Cys-40/Cys-146. The NTR domain maps to 27–146; it reads CSCFPPDETR…LQLFNDPQWC (120 aa).

As to expression, prismatic layer of shell (at protein level). Expressed primarily in the mantle with highest level in the mantle edge and lower level in the mantle pallium.

The protein resides in the secreted. The protein is NTR domain-containing protein of Margaritifera margaritifera (Freshwater pearl mussel).